The sequence spans 385 residues: MWGRLLLWPLVLGFSLSGGTQTPSVYDESGSTGGGDDSTPSILPAPRGYPGQVCANDSDTLELPDSSRALLLGWVPTRLVPALYGLVLVVGLPANGLALWVLATQAPRLPSTMLLMNLAAADLLLALALPPRIAYHLRGQRWPFGEAACRLATAALYGHMYGSVLLLAAVSLDRYLALVHPLRARALRGRRLALGLCMAAWLMAAALALPLTLQRQTFRLARSDRVLCHDALPLDAQASHWQPAFTCLALLGCFLPLLAMLLCYGATLHTLAASGRRYGHALRLTAVVLASAVAFFVPSNLLLLLHYSDPSPSAWGNLYGAYVPSLALSTLNSCVDPFIYYYVSAEFRDKVRAGLFQRSPGDTVASKASAEGGSRGMGTHSSLLQ.

The signal sequence occupies residues 1-17 (MWGRLLLWPLVLGFSLS). The propeptide at 18-47 (GGTQTPSVYDESGSTGGGDDSTPSILPAPR) is removed for receptor activation. A disordered region spans residues 21 to 42 (QTPSVYDESGSTGGGDDSTPSI). The Extracellular portion of the chain corresponds to 48-82 (GYPGQVCANDSDTLELPDSSRALLLGWVPTRLVPA). N56 carries an N-linked (GlcNAc...) asparagine glycan. Residues 83-103 (LYGLVLVVGLPANGLALWVLA) form a helical membrane-spanning segment. The Cytoplasmic portion of the chain corresponds to 104–108 (TQAPR). Residues 109-129 (LPSTMLLMNLAAADLLLALAL) form a helical membrane-spanning segment. The Extracellular segment spans residues 130-151 (PPRIAYHLRGQRWPFGEAACRL). A disulfide bridge links C149 with C228. A helical transmembrane segment spans residues 152–172 (ATAALYGHMYGSVLLLAAVSL). Residues 173-192 (DRYLALVHPLRARALRGRRL) lie on the Cytoplasmic side of the membrane. A helical membrane pass occupies residues 193–213 (ALGLCMAAWLMAAALALPLTL). At 214–247 (QRQTFRLARSDRVLCHDALPLDAQASHWQPAFTC) the chain is on the extracellular side. A helical transmembrane segment spans residues 248–268 (LALLGCFLPLLAMLLCYGATL). The Cytoplasmic segment spans residues 269–283 (HTLAASGRRYGHALR). Residues 284-304 (LTAVVLASAVAFFVPSNLLLL) form a helical membrane-spanning segment. Residues 305–319 (LHYSDPSPSAWGNLY) are Extracellular-facing. Residues 320-343 (GAYVPSLALSTLNSCVDPFIYYYV) form a helical membrane-spanning segment. The Cytoplasmic segment spans residues 344 to 385 (SAEFRDKVRAGLFQRSPGDTVASKASAEGGSRGMGTHSSLLQ). The segment at 362–385 (DTVASKASAEGGSRGMGTHSSLLQ) is disordered.

Belongs to the G-protein coupled receptor 1 family. A proteolytic cleavage generates a new N-terminus that functions as a tethered ligand. In terms of tissue distribution, widely expressed, with highest levels in lung, pancreas, thyroid, testis and small intestine. Not expressed in brain, kidney, spinal cord and peripheral blood leukocytes. Also detected in platelets.

The protein localises to the cell membrane. With respect to regulation, activated upon interaction by mucunain, a cowhage (Mucuna pruriens) plant cysteine proteinase. Its function is as follows. Receptor for activated thrombin or trypsin coupled to G proteins that stimulate phosphoinositide hydrolysis. May play a role in platelets activation. This is Proteinase-activated receptor 4 (F2RL3) from Homo sapiens (Human).